A 387-amino-acid polypeptide reads, in one-letter code: Carboxyaminopropylagmatine decarboxylase (387 aa).

Lys52 is modified (N6-(pyridoxal phosphate)lysine).

Belongs to the Orn/Lys/Arg decarboxylase class-II family. Requires pyridoxal 5'-phosphate as cofactor.

The catalysed reaction is N(1)-[(S)-3-amino-3-carboxypropyl]agmatine + H(+) = N(1)-(3-aminopropyl)agmatine + CO2. The protein operates within amine and polyamine biosynthesis; spermidine biosynthesis. Decarboxylase involved in the biosynthesis of spermidine via the carboxyaminopropylagmatine (CAPA) pathway. Catalyzes the decarboxylation of CAPA to form aminopropylagmatine (APA). Can also decarboxylate carboxyspermidine and carboxynorspermidine, but not ornithine, arginine, lysine and meso-diaminopimelate. The polypeptide is Carboxyaminopropylagmatine decarboxylase (Synechocystis sp. (strain ATCC 27184 / PCC 6803 / Kazusa)).